A 249-amino-acid chain; its full sequence is CDP-diacylglycerol pyrophosphatase (249 aa).

The helical transmembrane segment at 5–25 (GYFLLAVIVIVAAAGVGYWKF) threads the bilayer.

It belongs to the Cdh family.

The protein resides in the cell inner membrane. The enzyme catalyses a CDP-1,2-diacyl-sn-glycerol + H2O = a 1,2-diacyl-sn-glycero-3-phosphate + CMP + 2 H(+). Its pathway is phospholipid metabolism; CDP-diacylglycerol degradation; phosphatidate from CDP-diacylglycerol: step 1/1. The sequence is that of CDP-diacylglycerol pyrophosphatase from Salmonella arizonae (strain ATCC BAA-731 / CDC346-86 / RSK2980).